Reading from the N-terminus, the 1621-residue chain is Lysophospholipase NTE1 (1621 aa).

The Cytoplasmic segment spans residues 1-12 (MSSIPTPPDANG). The helical transmembrane segment at 13–33 (NPLIALAVAVIYAILYVLQGV) threads the bilayer. Residues 34 to 59 (KYGVSLLTIGIPSCIVRMLQYSLTIS) lie on the Lumenal side of the membrane. The chain crosses the membrane as a helical span at residues 60 to 80 (LGFPHLLALFAGALLALFFLI). The Cytoplasmic portion of the chain corresponds to 81–1621 (RYRYLTRYAQ…RGNRLRRMSI (1541 aa)). Disordered stretches follow at residues 188 to 209 (PDAS…TRPS), 250 to 379 (EGEE…SVPR), 545 to 566 (QTAT…LDET), 648 to 667 (WNLN…QRDD), 711 to 735 (VSAL…GSTR), 772 to 791 (DDEA…GASG), and 839 to 870 (FRST…ERPF). 2 stretches are compositionally biased toward low complexity: residues 195 to 209 (TPTP…TRPS) and 348 to 361 (RRSQ…RLNS). Residues 788–907 (GASG…GYLS) and 951–1070 (RLLS…IAGR) each bind a nucleoside 3',5'-cyclic phosphate. Residues 839–867 (FRSTSSNQENPNSTPGSKHRQSSFGSSNE) show a composition bias toward polar residues. A PNPLA domain is found at 1316-1480 (LVLGGGGARG…MDNTPIQPLR (165 aa)). Positions 1320–1325 (GGGARG) match the GXGXXG motif. The GXSXG signature appears at 1347 to 1351 (GCSIG). The active-site Nucleophile is Ser-1349. Asp-1467 serves as the catalytic Proton acceptor. The DGA/G motif lies at 1467–1469 (DGG).

Belongs to the NTE family.

It localises to the endoplasmic reticulum membrane. The catalysed reaction is a 1-acyl-sn-glycero-3-phosphocholine + H2O = sn-glycerol 3-phosphocholine + a fatty acid + H(+). Its activity is regulated as follows. Inhibited by organophosphorus esters. Intracellular phospholipase B that catalyzes the double deacylation of phosphatidylcholine (PC) to glycerophosphocholine (GroPCho). Plays an important role in membrane lipid homeostasis. Responsible for the rapid PC turnover in response to inositol, elevated temperatures, or when choline is present in the growth medium. The sequence is that of Lysophospholipase NTE1 (NTE1) from Cryptococcus neoformans var. neoformans serotype D (strain B-3501A) (Filobasidiella neoformans).